The following is a 127-amino-acid chain: Fluoride-specific ion channel FluC (127 aa).

4 consecutive transmembrane segments (helical) span residues 4–24 (LLLAVFIGGGTGSVARWLLSM), 35–55 (LGTLAANLIGAFIIGMGFAWF), 71–91 (TGFCGGLTTFSTFSAEVVFLL), and 103–123 (VFVNLLGSFAMTALAFWLFSA). Na(+) contacts are provided by Gly-75 and Thr-78.

Belongs to the fluoride channel Fluc/FEX (TC 1.A.43) family.

The protein resides in the cell inner membrane. The enzyme catalyses fluoride(in) = fluoride(out). With respect to regulation, na(+) is not transported, but it plays an essential structural role and its presence is essential for fluoride channel function. Its function is as follows. Fluoride-specific ion channel. Important for reducing fluoride concentration in the cell, thus reducing its toxicity. The chain is Fluoride-specific ion channel FluC from Escherichia coli O8 (strain IAI1).